Here is a 149-residue protein sequence, read N- to C-terminus: MNAYPWLEIPRTVRFSDTDAAGVMHFQHLLGWCHQAWEDSLEQFGIPVGAVFPGGRSDQPSVALPIVHCHADFRAPMYVGDAAVIHLLPKRIDPGCFEVVSEISLNTQKVASGCLQHLAIDAVTRQRCSLPEPIERWIEASTLGQIQPL.

Asp19 is an active-site residue.

Belongs to the 4-hydroxybenzoyl-CoA thioesterase family. DHNA-CoA hydrolase subfamily.

It catalyses the reaction 1,4-dihydroxy-2-naphthoyl-CoA + H2O = 1,4-dihydroxy-2-naphthoate + CoA + H(+). It participates in cofactor biosynthesis; phylloquinone biosynthesis. Its pathway is quinol/quinone metabolism; 1,4-dihydroxy-2-naphthoate biosynthesis; 1,4-dihydroxy-2-naphthoate from chorismate: step 7/7. Its function is as follows. Catalyzes the hydrolysis of 1,4-dihydroxy-2-naphthoyl-CoA (DHNA-CoA) to 1,4-dihydroxy-2-naphthoate (DHNA), a reaction involved in phylloquinone (vitamin K1) biosynthesis. This chain is 1,4-dihydroxy-2-naphthoyl-CoA hydrolase, found in Synechococcus sp. (strain CC9902).